The chain runs to 210 residues: NADH dehydrogenase [ubiquinone] iron-sulfur protein 8, mitochondrial (210 aa).

The N-terminal 34 residues, 1–34, are a transit peptide targeting the mitochondrion; sequence MRCLTTPMLLRALAQAARAGPPGGRSLHSSAVAA. 2 4Fe-4S ferredoxin-type domains span residues 102 to 131 and 141 to 170; these read RRYPSGEERCIACKLCEAICPAQAITIEAE and TRYDIDMTKCIYCGFCQEACPVDAIVEGPN. [4Fe-4S] cluster contacts are provided by C111, C114, C117, C121, C150, C153, C156, and C160.

It belongs to the complex I 23 kDa subunit family. As to quaternary structure, core subunit of respiratory chain NADH dehydrogenase (Complex I) which is composed of 45 different subunits. This is a component of the iron-sulfur (IP) fragment of the enzyme. Interacts with RAB5IF. Requires [4Fe-4S] cluster as cofactor. Expressed in all tissues with the highest level in heart and skeletal muscle and the lowest level in lung.

It localises to the mitochondrion inner membrane. It carries out the reaction a ubiquinone + NADH + 5 H(+)(in) = a ubiquinol + NAD(+) + 4 H(+)(out). In terms of biological role, core subunit of the mitochondrial membrane respiratory chain NADH dehydrogenase (Complex I) which catalyzes electron transfer from NADH through the respiratory chain, using ubiquinone as an electron acceptor. Essential for the catalytic activity and assembly of complex I. This Homo sapiens (Human) protein is NADH dehydrogenase [ubiquinone] iron-sulfur protein 8, mitochondrial (NDUFS8).